The following is an 82-amino-acid chain: MSDTIRTLQGRVLSDKMDKSITVAIERKVKHPLYGKFIKRTTKIHAHDEQNQCNAGDLVTIRECRPLSKTKSWTLVEVISKA.

The protein belongs to the universal ribosomal protein uS17 family. Part of the 30S ribosomal subunit.

Functionally, one of the primary rRNA binding proteins, it binds specifically to the 5'-end of 16S ribosomal RNA. The polypeptide is Small ribosomal subunit protein uS17 (Shewanella halifaxensis (strain HAW-EB4)).